The chain runs to 178 residues: Large ribosomal subunit protein uL6 (178 aa).

The protein belongs to the universal ribosomal protein uL6 family. Part of the 50S ribosomal subunit.

Its function is as follows. This protein binds to the 23S rRNA, and is important in its secondary structure. It is located near the subunit interface in the base of the L7/L12 stalk, and near the tRNA binding site of the peptidyltransferase center. The protein is Large ribosomal subunit protein uL6 of Streptococcus pneumoniae (strain 70585).